Consider the following 91-residue polypeptide: Mercuric transport protein periplasmic component (91 aa).

Positions 1–19 (MKKLFASLALAAAVAPVWA) are cleaved as a signal peptide. Positions 22-88 (QTVTLAVPGM…ATADAGYPSS (67 aa)) constitute an HMA domain. Cysteine 33 and cysteine 36 together coordinate Hg(2+).

It belongs to the MerP family. As to quaternary structure, monomer.

It localises to the periplasm. Functionally, involved in mercury resistance. Acts as a mercury scavenger that specifically binds to a mercuric ion in the periplasm and probably passes it to the cytoplasmic mercuric reductase MerA via the mercuric transport protein MerT. This chain is Mercuric transport protein periplasmic component, found in Shigella flexneri.